A 487-amino-acid chain; its full sequence is Betaine aldehyde dehydrogenase (487 aa).

K(+) is bound by residues Ile27 and Asp93. 149 to 151 contributes to the NAD(+) binding site; the sequence is GAW. The active-site Charge relay system is the Lys161. NAD(+)-binding positions include 175-178 and 228-231; these read KPSE and SVPT. Residue Leu243 participates in K(+) binding. Glu249 (proton acceptor) is an active-site residue. 3 residues coordinate NAD(+): Gly251, Cys283, and Glu384. Cys283 (nucleophile) is an active-site residue. The residue at position 283 (Cys283) is a Cysteine sulfenic acid (-SOH). K(+) contacts are provided by Lys454 and Gly457. The active-site Charge relay system is Glu461.

It belongs to the aldehyde dehydrogenase family. As to quaternary structure, dimer of dimers. It depends on K(+) as a cofactor.

The catalysed reaction is betaine aldehyde + NAD(+) + H2O = glycine betaine + NADH + 2 H(+). It participates in amine and polyamine biosynthesis; betaine biosynthesis via choline pathway; betaine from betaine aldehyde: step 1/1. Its function is as follows. Involved in the biosynthesis of the osmoprotectant glycine betaine. Catalyzes the irreversible oxidation of betaine aldehyde to the corresponding acid. The protein is Betaine aldehyde dehydrogenase of Brucella suis (strain ATCC 23445 / NCTC 10510).